The chain runs to 1258 residues: Plasma membrane calcium-transporting ATPase 3 (1258 aa).

Residues 1 to 19 (MGDMANSSIEFHPKPQQQR) show a composition bias toward polar residues. The disordered stretch occupies residues 1–22 (MGDMANSSIEFHPKPQQQREVP). At 1-97 (MGDMANSSIE…NFIPPKQPKT (97 aa)) the chain is on the cytoplasmic side. Residue Ser8 is modified to Phosphoserine. The chain crosses the membrane as a helical span at residues 98-118 (FLQLVWEALQDVTLIILEVAA). The Extracellular portion of the chain corresponds to 119–155 (IVSLGLSFYAPPGEESEACGNVSGGAEDEGEAEAGWI). The chain crosses the membrane as a helical span at residues 156-176 (EGAAILLSVICVVLVTAFNDW). The Cytoplasmic segment spans residues 177 to 364 (SKEKQFRGLQ…KEKSVLQGKL (188 aa)). 2 disordered regions span residues 298 to 328 (EEEK…GAVA) and 335 to 354 (KSAE…NVPK). 2 stretches are compositionally biased toward basic and acidic residues: residues 299–308 (EEKKDKKGKQ) and 342–354 (MEER…NVPK). The chain crosses the membrane as a helical span at residues 365–384 (TKLAVQIGKAGLVMSAITVI). The Extracellular segment spans residues 385–417 (ILVLYFVIETFVVDGRVWLAECTPVYVQYFVKF). The helical transmembrane segment at 418–435 (FIIGVTVLVVAVPEGLPL) threads the bilayer. The Cytoplasmic portion of the chain corresponds to 436 to 849 (AVTISLAYSV…MWGRNVYDSI (414 aa)). The active-site 4-aspartylphosphate intermediate is the Asp473. Asp794 and Asp798 together coordinate Mg(2+). A helical membrane pass occupies residues 850–869 (SKFLQFQLTVNVVAVIVAFT). Residues 870 to 879 (GACITQDSPL) are Extracellular-facing. Residues 880-900 (KAVQMLWVNLIMDTFASLALA) form a helical membrane-spanning segment. At 901 to 920 (TEPPTESLLLRKPYGRDKPL) the chain is on the cytoplasmic side. A helical membrane pass occupies residues 921–943 (ISRTMMKNILGHAVYQLTIIFTL). Topologically, residues 944–961 (LFVGELFFDIDSGRNAPL) are extracellular. A helical transmembrane segment spans residues 962-983 (HSPPSEHYTIIFNTFVMMQLFN). Over 984–1002 (EINARKIHGERNVFDGIFS) the chain is Cytoplasmic. Residues 1003 to 1024 (NPIFCTIVLGTFGIQIVIVQFG) traverse the membrane as a helical segment. At 1025–1034 (GKPFSCSPLS) the chain is on the extracellular side. The helical transmembrane segment at 1035–1056 (TEQWLWCLFVGVGELVWGQVIA) threads the bilayer. Residues 1057–1258 (TIPTSQLKCL…SPLHSMETSL (202 aa)) are Cytoplasmic-facing. Thr1079 bears the Phosphothreonine mark. The interval 1097 to 1114 (LRRGQILWFRGLNRIQTQ) is calmodulin-binding subdomain A. Phosphothreonine; by PKC is present on Thr1113. The segment at 1115-1124 (MEVVSTFKRS) is calmodulin-binding subdomain B. Ser1126 bears the Phosphoserine mark. Residues 1204-1258 (ENEERLRAPPPPPPNQNNNAIDSGIYLTTHATKSATSSAFSSRPGSPLHSMETSL) form a disordered region. Positions 1231 to 1245 (TTHATKSATSSAFSS) are enriched in low complexity.

It belongs to the cation transport ATPase (P-type) (TC 3.A.3) family. Type IIB subfamily. In terms of assembly, interacts with PDZD11. Interacts (via N-terminus) with YWHAE. As to expression, expressed predominantly in brain and skeletal muscle. Expressed in the molecular layer of the cerebellar cortex, in particular in granule cells (at protein level). Expressed in aldosterone producing glomerulosa cells of adrenal glands (at protein level). Detected at low levels in various tissues including testis, stomach, small intestine, and large intestine. Most abundant form in brain and most other tissues. In terms of tissue distribution, most abundant form in skeletal muscle and is also found in brain and at low levels in testis and kidney.

It is found in the cell membrane. Its subcellular location is the presynaptic cell membrane. The enzyme catalyses Ca(2+)(in) + ATP + H2O = Ca(2+)(out) + ADP + phosphate + H(+). Functionally, ATP-driven Ca(2+) ion pump involved in the maintenance of basal intracellular Ca(2+) levels at the presynaptic terminals. Uses ATP as an energy source to transport cytosolic Ca(2+) ions across the plasma membrane to the extracellular compartment. May counter-transport protons, but the mechanism and the stoichiometry of this Ca(2+)/H(+) exchange remains to be established. The sequence is that of Plasma membrane calcium-transporting ATPase 3 (Atp2b3) from Rattus norvegicus (Rat).